The chain runs to 411 residues: Pyridinium-3,5-bisthiocarboxylic acid mononucleotide nickel insertion protein (411 aa).

This sequence belongs to the LarC family.

The enzyme catalyses Ni(II)-pyridinium-3,5-bisthiocarboxylate mononucleotide = pyridinium-3,5-bisthiocarboxylate mononucleotide + Ni(2+). Its function is as follows. Involved in the biosynthesis of a nickel-pincer cofactor ((SCS)Ni(II) pincer complex). Binds Ni(2+), and functions in nickel delivery to pyridinium-3,5-bisthiocarboxylic acid mononucleotide (P2TMN), to form the mature cofactor. Is thus probably required for the activation of nickel-pincer cofactor-dependent enzymes. This Geobacillus kaustophilus (strain HTA426) protein is Pyridinium-3,5-bisthiocarboxylic acid mononucleotide nickel insertion protein.